Consider the following 177-residue polypeptide: Inner membrane-spanning protein YciB (177 aa).

The next 5 helical transmembrane spans lie at 23-43 (MFVA…WAWF), 50-70 (TMQW…LLLH), 73-93 (HFIM…LLIS), 119-139 (LTWA…FVAY), and 149-169 (FKLF…SLFL).

Belongs to the YciB family.

The protein localises to the cell inner membrane. In terms of biological role, plays a role in cell envelope biogenesis, maintenance of cell envelope integrity and membrane homeostasis. The chain is Inner membrane-spanning protein YciB from Chromobacterium violaceum (strain ATCC 12472 / DSM 30191 / JCM 1249 / CCUG 213 / NBRC 12614 / NCIMB 9131 / NCTC 9757 / MK).